The sequence spans 471 residues: Desmin (471 aa).

Positions 2 to 109 are head; the sequence is SQAYSSSQRV…QEFLTTRTNE (108 aa). S7 carries the post-translational modification Phosphoserine; by CDK1. Residue S12 is modified to Phosphoserine; by AURKB. R16 carries the post-translational modification Omega-N-methylarginine. Position 17 is a phosphothreonine; by AURKB and ROCK1 (T17). S28 is modified (phosphoserine; by CDK1). Residue S31 is modified to Phosphoserine. S32 is modified (phosphoserine; by CDK1). Position 37 is an asymmetric dimethylarginine; alternate (R37). The residue at position 37 (R37) is an Omega-N-methylarginine; alternate. Position 45 is a phosphoserine (S45). ADP-ribosylarginine is present on R58. S60 bears the Phosphoserine; by AURKB mark. R70 carries the post-translational modification Omega-N-methylarginine. Residue T77 is modified to Phosphothreonine; by ROCK1. The residue at position 81 (S81) is a Phosphoserine. One can recognise an IF rod domain in the interval 109 to 417; it reads EKVELQELND…KLLEGEESRI (309 aa). A coil 1A region spans residues 110–142; sequence KVELQELNDRFANYIEKVRFLEQQNAALAAEVN. Positions 143-152 are linker 1; it reads RLKGREPTRV. The tract at residues 153 to 253 is coil 1B; that stretch reads AEIYEEELRE…HEEEIRELQA (101 aa). The segment at 254 to 269 is linker 12; it reads QLQEQQVQVEMDMSKP. The interval 269–416 is interaction with NEB; the sequence is PDLTAALRDI…RKLLEGEESR (148 aa). Residues 270–288 are coil 2A; it reads DLTAALRDIRAQYETIAAK. The segment at 289–296 is linker 2; the sequence is NISEAEEW. Residues S291, S359, S362, and S425 each carry the phosphoserine modification. The tract at residues 297-413 is coil 2B; that stretch reads YKSKVSDLTQ…ATYRKLLEGE (117 aa). Positions 414–471 are tail; the sequence is ESRINLPIQTFSALNFRETSPEQRGSEVHTKKTVMIKTIETRDGEVVSEATQQQHEVL. The interaction with CRYAB stretch occupies residues 439 to 454; that stretch reads SEVHTKKTVMIKTIET.

The protein belongs to the intermediate filament family. Homomer. Interacts with DST. Interacts with MTM1. Interacts with EPPK1; interaction is dependent of higher-order structure of intermediate filament. Interacts with CRYAB. Interacts with NEB (via nebulin repeats 160-164). Interacts (via rod region) with NEBL (via nebulin repeats 1-5). Interacts with ASB2; the interaction targets DES for proteasomal degradation. Interacts with PKP1. Interacts with FLII. In terms of processing, ADP-ribosylation prevents ability to form intermediate filaments. Phosphorylation at Ser-7, Ser-28 and Ser-32 by CDK1 and phosphorylation at Ser-60 by AURKB contribute to efficient separation of desmin intermediate filaments during mitosis. Post-translationally, ubiquitination by a SCF-like complex containing ASB2 leads to proteasomal degradation.

It is found in the cytoplasm. The protein localises to the myofibril. The protein resides in the sarcomere. It localises to the z line. Its subcellular location is the cell membrane. It is found in the sarcolemma. The protein localises to the nucleus. The protein resides in the cell tip. It localises to the nucleus envelope. Functionally, muscle-specific type III intermediate filament essential for proper muscular structure and function. Plays a crucial role in maintaining the structure of sarcomeres, inter-connecting the Z-disks and forming the myofibrils, linking them not only to the sarcolemmal cytoskeleton, but also to the nucleus and mitochondria, thus providing strength for the muscle fiber during activity. In adult striated muscle they form a fibrous network connecting myofibrils to each other and to the plasma membrane from the periphery of the Z-line structures. May act as a sarcomeric microtubule-anchoring protein: specifically associates with detyrosinated tubulin-alpha chains, leading to buckled microtubules and mechanical resistance to contraction. Required for nuclear membrane integrity, via anchoring at the cell tip and nuclear envelope, resulting in maintenance of microtubule-derived intracellular mechanical forces. Contributes to the transcriptional regulation of the NKX2-5 gene in cardiac progenitor cells during a short period of cardiomyogenesis and in cardiac side population stem cells in the adult. Plays a role in maintaining an optimal conformation of nebulette (NEB) on heart muscle sarcomeres to bind and recruit cardiac alpha-actin. In Sus scrofa (Pig), this protein is Desmin (DES).